We begin with the raw amino-acid sequence, 201 residues long: MBF complex negative regulatory component yox1 (201 aa).

The span at 1–22 (MSLSDSPSKSGNTGKDLISNNE) shows a compositional bias: polar residues. A disordered region spans residues 1–42 (MSLSDSPSKSGNTGKDLISNNEAKNHEDEETHQKKRRRRTTD). Residues 23-32 (AKNHEDEETH) are compositionally biased toward basic and acidic residues. The homeobox DNA-binding region spans 33–92 (QKKRRRRTTDAEATLLEQYFLKTPKPSLIERQELSKKLKSSMTPRELQIWFQNKRQSLRR).

Component of the MBF transcription factor complex. Post-translationally, phosphorylated in response to hydroxyurea. Phosphorylation inhibits the repressor activity and is dependent on rad3. However, the regulation of yox1 by rad3 is probably indirect.

It localises to the nucleus. In terms of biological role, negative regulatory component of the MBF transcription factor complex involved in cell-cycle G1/S phase-specific gene expression and more particularly DNA replication checkpoint-dependent gene expression. This is MBF complex negative regulatory component yox1 (yox1) from Schizosaccharomyces pombe (strain 972 / ATCC 24843) (Fission yeast).